We begin with the raw amino-acid sequence, 289 residues long: N-methyltransferase FrzE (289 aa).

This sequence belongs to the methyltransferase superfamily.

The enzyme catalyses (1S,4S)-4-[(4-hydroxyphenyl)methyl]-2,5-diazaspiro[bicyclo[3.2.1]octane-6,1'-cyclohexan]-4'-one + S-adenosyl-L-methionine = (1S,4S)-4-[(4-hydroxyphenyl)methyl]-2-methyl-2,5-diazaspiro[bicyclo[3.2.1]octane-6,1'-cyclohexan]-4'-one + S-adenosyl-L-homocysteine + H(+). It catalyses the reaction (1S,4S)-4-[(4-methoxyphenyl)methyl]-2,5-diazaspiro[bicyclo[3.2.1]octane-6,1'-cyclohexan]-4'-one + S-adenosyl-L-methionine = (1S,4S)-4-[(4-methoxyphenyl)methyl]-2-methyl-2,5-diazaspiro[bicyclo[3.2.1]octane-6,1'-cyclohexan]-4'-one + S-adenosyl-L-homocysteine + H(+). The protein operates within secondary metabolite biosynthesis. Its function is as follows. N-methyltransferase; part of the gene cluster that mediates the biosynthesis of the alkaloid (-)-FR901483, a potent immunosuppressant that shows efficacy in animal models and a probable inhibitor of purine nucleotide biosynthesis by targeting phosphoribosylpyrophosphate amidotransferase (PPAT). Within the pathway, FrzE methylates the amine at position C10'. The biosynthesis of (-)-FR901483 starts with the condensation of two L-tyrosines to yield (S,S)-dityrosyl-piperazine. This process occurs in 3 steps with the non-canonical nonribosomal peptide synthetase FrzA catalyzing the reduction of L-tyrosine into L-tyrosinal, the spontaneous condensation of 2 L-tyrosinal units, and the subsequent reduction by the NmrA-like family domain-containing oxidoreductase FrzB. The cytochrome P450 monooxygenase FrzC then performs coupling between N10 and C1' to morph the piperazine into a 1,4-diazabicyclo[3.2.1]octane spiro-fused to a 2,5-cyclohexadienone. The dienone portion is further reduced to cyclohexanone by the flavin-dependent reductase FrzD. The methyltranserases (MTs) FrzE and FrzF are then involved in the methylation at the C10' amine and the C4 phenolic oxygen, respectively. The order of the two MTs appear to be interchangeable. Cleavage of the C9-N10' bond by the dioxygenase FrzG then leads to formation of a conjugated iminium. In addition to the oxidation of C9, an additional dehydrogenation between C7 and C8 can occur to give a likely shunt product. The next biosynthetic step is the intramolecular aldol condensation catalyzed by the newly identified aldolase FrzH to yield an aza-tricyclic product with the formation of a C9-C3' bond. The short-chain dehydrogenase/reductase FrzI then produces dephospho-(-)-FR901483 that is phosphorylated at C4'-OH into (-)-FR901483 by the phosphotransferase FrzJ. In Cladobotryum sp, this protein is N-methyltransferase FrzE.